A 283-amino-acid chain; its full sequence is GTP cyclohydrolase MptA (283 aa).

Belongs to the GTP cyclohydrolase IV family. In terms of assembly, homodimer. The cofactor is Fe(2+).

The enzyme catalyses GTP + H2O = 7,8-dihydroneopterin 2',3'-cyclic phosphate + formate + diphosphate + H(+). It functions in the pathway cofactor biosynthesis; 5,6,7,8-tetrahydromethanopterin biosynthesis. Converts GTP to 7,8-dihydro-D-neopterin 2',3'-cyclic phosphate, the first intermediate in the biosynthesis of coenzyme methanopterin. The sequence is that of GTP cyclohydrolase MptA from Aeropyrum pernix (strain ATCC 700893 / DSM 11879 / JCM 9820 / NBRC 100138 / K1).